The following is a 192-amino-acid chain: UPF0312 protein PC1_2518 (192 aa).

Residues 1-23 (MLKKTLLSLTAVSMLASAGSALA) form the signal peptide.

Belongs to the UPF0312 family. Type 1 subfamily.

It localises to the periplasm. The polypeptide is UPF0312 protein PC1_2518 (Pectobacterium carotovorum subsp. carotovorum (strain PC1)).